Reading from the N-terminus, the 94-residue chain is UPF0768 protein YBL029C-A (94 aa).

Belongs to the UPF0768 family.

It is found in the cell membrane. The polypeptide is UPF0768 protein YBL029C-A (Saccharomyces cerevisiae (strain ATCC 204508 / S288c) (Baker's yeast)).